Consider the following 294-residue polypeptide: 4-hydroxy-tetrahydrodipicolinate synthase (294 aa).

Residue threonine 44 participates in pyruvate binding. The active-site Proton donor/acceptor is the tyrosine 132. Lysine 161 functions as the Schiff-base intermediate with substrate in the catalytic mechanism. Isoleucine 206 serves as a coordination point for pyruvate.

It belongs to the DapA family. As to quaternary structure, homotetramer; dimer of dimers.

Its subcellular location is the cytoplasm. It catalyses the reaction L-aspartate 4-semialdehyde + pyruvate = (2S,4S)-4-hydroxy-2,3,4,5-tetrahydrodipicolinate + H2O + H(+). Its pathway is amino-acid biosynthesis; L-lysine biosynthesis via DAP pathway; (S)-tetrahydrodipicolinate from L-aspartate: step 3/4. Is not inhibited by (S)-lysine, in contrast to E.coli DapA. Catalyzes the condensation of (S)-aspartate-beta-semialdehyde [(S)-ASA] and pyruvate to 4-hydroxy-tetrahydrodipicolinate (HTPA). This chain is 4-hydroxy-tetrahydrodipicolinate synthase, found in Thermotoga maritima (strain ATCC 43589 / DSM 3109 / JCM 10099 / NBRC 100826 / MSB8).